The sequence spans 446 residues: Exodeoxyribonuclease 7 large subunit (446 aa).

It belongs to the XseA family. Heterooligomer composed of large and small subunits.

The protein resides in the cytoplasm. It catalyses the reaction Exonucleolytic cleavage in either 5'- to 3'- or 3'- to 5'-direction to yield nucleoside 5'-phosphates.. Functionally, bidirectionally degrades single-stranded DNA into large acid-insoluble oligonucleotides, which are then degraded further into small acid-soluble oligonucleotides. This is Exodeoxyribonuclease 7 large subunit from Shewanella denitrificans (strain OS217 / ATCC BAA-1090 / DSM 15013).